A 431-amino-acid chain; its full sequence is MAGQTVIVSGLNPAAILQSTIGGATPAPAAENDHTRKVVPLSRDALQDFMVSIITQKLQDEKQPFYVLDLGEVVSLMDQWNAGLPNIRPFYAVKCNPEPSFLSMLSAMGSNFDCASRAEIEYVLSLGISPDRIVFANPCKPESDIIFAAKVGVNLTTFDSEDEVYKIRKHHPKCELLLRIKPMDDGNARCPMGPKYGALPEEVEPLLRTAQAARLTVSGVSFHIGSGDADSKAYLGAIAAAKGVFETAARFGMSKMTVLDIGGGFTSGHQFTTASAAVRSALEQHFHDEQELTIIAEPGRFFAETAFTLATTIIGKRVRGELREYWINDGLYGSMNCVLYDHATVNATPLACMSNRSNLNCGGSKTFPSTVFGPTCDALDTVLRDYQLPELQVNDWLIFPNMGAYTKAAGSNFNGFNTSAIVTHLAYAYPS.

Lys-94 bears the N6-(pyridoxal phosphate)lysine mark. Residues Ser-226, Gly-264, and 297–300 each bind pyridoxal 5'-phosphate; that span reads EPGR. 340 to 341 is a binding site for substrate; sequence YD. Cys-376 (proton donor; shared with dimeric partner) is an active-site residue. Residue Asp-377 coordinates substrate. Position 405 (Tyr-405) interacts with pyridoxal 5'-phosphate.

The protein belongs to the Orn/Lys/Arg decarboxylase class-II family. In terms of assembly, homodimer. Only the dimer is catalytically active, as the active sites are constructed of residues from both monomers. The cofactor is pyridoxal 5'-phosphate.

The catalysed reaction is L-ornithine + H(+) = putrescine + CO2. Its pathway is amine and polyamine biosynthesis; putrescine biosynthesis via L-ornithine pathway; putrescine from L-ornithine: step 1/1. With respect to regulation, inhibited by antizyme (AZ) in response to polyamine levels. AZ inhibits the assembly of the functional homodimer by binding to ODC monomers and targeting them for ubiquitin-independent proteolytic destruction by the 26S proteasome. Its function is as follows. Catalyzes the first and rate-limiting step of polyamine biosynthesis that converts ornithine into putrescine, which is the precursor for the polyamines, spermidine and spermine. Polyamines are essential for cell proliferation and are implicated in cellular processes, ranging from DNA replication to apoptosis. The polypeptide is Ornithine decarboxylase (Datura stramonium (Jimsonweed)).